Reading from the N-terminus, the 364-residue chain is MDEQVVKLAKETVARYRELTEELSDPAIFNDQRRYAEVAREHSRMRRGAELSERFLEALREEREARELIPAAESAEEREFFAGEAREAGRRAGELAEEIRSELIDRDPNDDKDVILEIRAGTGGDEAALFAGDLYEMYARYADRLGFRHRVLDASPAEVGGYKEIIVEIEGDGAYSVFKHEGGTHRVQRVPKTESQGRIHTSTATVAVLPEAEEVEVEINPNDLEIDVYRSSGPGGQSVNTTDSAVRITHKPTGLVVTCQNEKSQLQNKEQALRILRSRLLEREMRERQEREGQMRLAQFGSGDRSAKIRTYNFPQGRITDHRVGLTVHNLEAVLGGELEEFTKALAAKERADRLAASATGSPG.

N5-methylglutamine is present on Q237.

The protein belongs to the prokaryotic/mitochondrial release factor family. Methylated by PrmC. Methylation increases the termination efficiency of RF1.

It is found in the cytoplasm. Peptide chain release factor 1 directs the termination of translation in response to the peptide chain termination codons UAG and UAA. This is Peptide chain release factor 1 from Rubrobacter xylanophilus (strain DSM 9941 / JCM 11954 / NBRC 16129 / PRD-1).